A 185-amino-acid chain; its full sequence is Ribosome-recycling factor (185 aa).

Residues glutamate 137–glutamate 159 form a disordered region.

This sequence belongs to the RRF family.

It is found in the cytoplasm. Its function is as follows. Responsible for the release of ribosomes from messenger RNA at the termination of protein biosynthesis. May increase the efficiency of translation by recycling ribosomes from one round of translation to another. This chain is Ribosome-recycling factor, found in Erythrobacter litoralis (strain HTCC2594).